We begin with the raw amino-acid sequence, 942 residues long: Protein inturned (942 aa).

Disordered regions lie at residues methionine 1–leucine 56 and leucine 128–valine 156. The segment covering serine 22–serine 32 has biased composition (acidic residues). The span at aspartate 33–aspartate 48 shows a compositional bias: low complexity. Residues serine 137–valine 156 are compositionally biased toward polar residues. The PDZ domain maps to leucine 185 to asparagine 267. Serine 674 and serine 678 each carry phosphoserine. A disordered region spans residues lysine 707–aspartate 751.

The protein belongs to the inturned family. Component of the CPLANE (ciliogenesis and planar polarity effectors) complex, composed of INTU, FUZ and WDPCP. Interacts with CPLANE1. Interacts with NPHP4 and DAAM1; INTU is mediating the interaction between NPHP4 and DAAM1. As to expression, widely expressed in E8.5 and E9.5 wild type embryos. Present in various adult organs (at protein level).

The protein localises to the cytoplasm. It localises to the cell surface. Its subcellular location is the cytoskeleton. It is found in the cilium basal body. The protein resides in the microtubule organizing center. The protein localises to the centrosome. It localises to the centriole. In terms of biological role, plays a key role in ciliogenesis and embryonic development. Regulator of cilia formation by controlling the organization of the apical actin cytoskeleton and the positioning of the basal bodies at the apical cell surface, which in turn is essential for the normal orientation of elongating ciliary microtubules. Plays a key role in definition of cell polarity via its role in ciliogenesis but not via conversion extension. Has an indirect effect on hedgehog signaling. Proposed to function as core component of the CPLANE (ciliogenesis and planar polarity effectors) complex involved in the recruitment of peripheral IFT-A proteins to basal bodies. Required for recruitment of CPLANE2 to the mother centriole. Binds phosphatidylinositol 3-phosphate with highest affinity, followed by phosphatidylinositol 4-phosphate and phosphatidylinositol 5-phosphate. This is Protein inturned (Intu) from Mus musculus (Mouse).